We begin with the raw amino-acid sequence, 86 residues long: Cell division topological specificity factor (86 aa).

This sequence belongs to the MinE family.

Its function is as follows. Prevents the cell division inhibition by proteins MinC and MinD at internal division sites while permitting inhibition at polar sites. This ensures cell division at the proper site by restricting the formation of a division septum at the midpoint of the long axis of the cell. This is Cell division topological specificity factor from Shewanella sediminis (strain HAW-EB3).